Consider the following 109-residue polypeptide: Large ribosomal subunit protein uL24 (109 aa).

The protein belongs to the universal ribosomal protein uL24 family. Part of the 50S ribosomal subunit.

In terms of biological role, one of two assembly initiator proteins, it binds directly to the 5'-end of the 23S rRNA, where it nucleates assembly of the 50S subunit. One of the proteins that surrounds the polypeptide exit tunnel on the outside of the subunit. The polypeptide is Large ribosomal subunit protein uL24 (Legionella pneumophila subsp. pneumophila (strain Philadelphia 1 / ATCC 33152 / DSM 7513)).